A 90-amino-acid polypeptide reads, in one-letter code: MIYTDPTTGATTSTDAPSTNYLNRLTPNMFLTILAVVVIIALIIIFVQSSSNGNSSGGNVPPNALGGFVNPLNATMRANPFMNTPQRQML.

A helical transmembrane segment spans residues 27 to 47 (PNMFLTILAVVVIIALIIIFV).

It localises to the virion membrane. Its function is as follows. Component of the polyhedra envelope. Plays an essential role in the budded virus production. The chain is Protein E18 (E18) from Autographa californica nuclear polyhedrosis virus (AcMNPV).